Consider the following 463-residue polypeptide: UDP-N-acetylmuramoylalanine--D-glutamate ligase (463 aa).

Position 116–122 (116–122 (GTNGKTT)) interacts with ATP.

Belongs to the MurCDEF family.

The protein resides in the cytoplasm. The enzyme catalyses UDP-N-acetyl-alpha-D-muramoyl-L-alanine + D-glutamate + ATP = UDP-N-acetyl-alpha-D-muramoyl-L-alanyl-D-glutamate + ADP + phosphate + H(+). It functions in the pathway cell wall biogenesis; peptidoglycan biosynthesis. Cell wall formation. Catalyzes the addition of glutamate to the nucleotide precursor UDP-N-acetylmuramoyl-L-alanine (UMA). This is UDP-N-acetylmuramoylalanine--D-glutamate ligase from Synechococcus elongatus (strain ATCC 33912 / PCC 7942 / FACHB-805) (Anacystis nidulans R2).